The primary structure comprises 522 residues: Sterol O-acyltransferase 2 (522 aa).

2 disordered regions span residues M1–P36 and S74–P96. The Cytoplasmic segment spans residues M1–F120. Residues G17 to P36 show a composition bias toward basic and acidic residues. A cholesterol-binding site is contributed by H119. The helical transmembrane segment at R121 to D142 threads the bilayer. At F143–Q162 the chain is on the lumenal side. The helical transmembrane segment at L163–W188 threads the bilayer. The Cytoplasmic portion of the chain corresponds to A189–A196. Residues T197 to V220 form a helical membrane-spanning segment. Topologically, residues E221–S228 are lumenal. A helical membrane pass occupies residues R229–P252. Residues G253–R293 are Cytoplasmic-facing. Position 277 is a cysteine sulfenic acid (-SOH); alternate (C277). C277 participates in a covalent cross-link: Glycyl cysteine thioester (Cys-Gly) (interchain with G-Cter in ubiquitin); alternate. Residues W294–M326 traverse the membrane as a helical segment. The Lumenal segment spans residues S327–A343. The chain crosses the membrane as a helical span at residues T344–M369. At L370–R417 the chain is on the cytoplasmic side. The FYXDWWN motif motif lies at F377–N383. An acyl-CoA is bound by residues N389, R392, N395, H399, Y407, and S430. The chain crosses the membrane as a helical span at residues A418–L442. H434 is a catalytic residue. The Lumenal segment spans residues G443 to V448. Residues M449–M464 form a helical membrane-spanning segment. Residues H465–G470 lie on the Cytoplasmic side of the membrane. The chain crosses the membrane as a helical span at residues P471–C502. Residues P503–T522 lie on the Lumenal side of the membrane.

This sequence belongs to the membrane-bound acyltransferase family. Sterol o-acyltransferase subfamily. As to quaternary structure, may form homo- or heterodimers. Interacts with INSIG1; the interaction is direct and promotes association with AMFR/gp78. In terms of processing, polyubiquitinated by AMFR/gp78 at Cys-277, leading to its degradation when the lipid levels are low. Association with AMFR/gp78 is mediated via interaction with INSIG1. High concentration of cholesterol and fatty acid results in Cys-277 oxidation, preventing ubiquitination at the same site, resulting in protein stabilization. Oxidized at Cys-277: high concentration of cholesterol and fatty acid induce reactive oxygen species, which oxidizes Cys-277, preventing ubiquitination at the same site, and resulting in protein stabilization. As to expression, expression seems confined in hepatocytes and enterocytes.

The protein localises to the endoplasmic reticulum membrane. It catalyses the reaction a sterol + a long-chain fatty acyl-CoA = a long-chain 3-hydroxysterol ester + CoA. It carries out the reaction cholesterol + an acyl-CoA = a cholesterol ester + CoA. The catalysed reaction is cholesterol + (9Z)-octadecenoyl-CoA = cholesteryl (9Z-octadecenoate) + CoA. The enzyme catalyses (5Z,8Z,11Z,14Z,17Z)-eicosapentaenoyl-CoA + cholesterol = (5Z,8Z,11Z,14Z,17Z-eicosapentaenoyl)-cholesterol + CoA. It catalyses the reaction (9Z,12Z,15Z)-octadecatrienoyl-CoA + cholesterol = (9Z,12Z,15Z-octadecatrienoyl)-cholesterol + CoA. It carries out the reaction (5Z,8Z,11Z,14Z)-eicosatetraenoyl-CoA + cholesterol = cholesteryl (5Z,8Z,11Z,14Z)-eicosatetraenoate + CoA. In terms of biological role, catalyzes the formation of fatty acid-cholesterol esters, which are less soluble in membranes than cholesterol. Plays a role in lipoprotein assembly and dietary cholesterol absorption. Utilizes oleoyl-CoA ((9Z)-octadecenoyl-CoA) and linolenoyl-CoA ((9Z,12Z,15Z)-octadecatrienoyl-CoA) as substrates. May provide cholesteryl esters for lipoprotein secretion from hepatocytes and intestinal mucosa. Its function is as follows. Has lower enzymatic activity compared to isoform 1. This is Sterol O-acyltransferase 2 from Homo sapiens (Human).